The sequence spans 248 residues: Small ribosomal subunit protein uS2 (248 aa).

This sequence belongs to the universal ribosomal protein uS2 family.

In Cupriavidus necator (strain ATCC 17699 / DSM 428 / KCTC 22496 / NCIMB 10442 / H16 / Stanier 337) (Ralstonia eutropha), this protein is Small ribosomal subunit protein uS2.